The following is a 228-amino-acid chain: Ephrin-A5 (228 aa).

The first 20 residues, 1–20 (MLHVEMLTLVFLVLWMCVFS), serve as a signal peptide directing secretion. The Ephrin RBD domain occupies 29 to 162 (ADRYAVYWNS…KLKVFVRPTN (134 aa)). The N-linked (GlcNAc...) asparagine glycan is linked to asparagine 37. Intrachain disulfides connect cysteine 62-cysteine 102 and cysteine 90-cysteine 151. The disordered stretch occupies residues 186-205 (EPADDTVHESAEPSRGENAA). The segment covering 190 to 200 (DTVHESAEPSR) has biased composition (basic and acidic residues). A lipid anchor (GPI-anchor amidated asparagine) is attached at asparagine 203. The propeptide at 204 to 228 (AAQTPRIPSRLLAILLFLLAMLLTL) is removed in mature form.

It belongs to the ephrin family. As to quaternary structure, binds to EPHB2. Interacts with EPHA8; activates EPHA8. Binds to the receptor tyrosine kinases EPHA2, EPHA3 and EPHB1. Forms a ternary EFNA5-EPHA3-ADAM10 complex mediating EFNA5 extracellular domain shedding by ADAM10 which regulates the EFNA5-EPHA3 complex internalization and function.

The protein localises to the cell membrane. It is found in the membrane. It localises to the caveola. In terms of biological role, cell surface GPI-bound ligand for Eph receptors, a family of receptor tyrosine kinases which are crucial for migration, repulsion and adhesion during neuronal, vascular and epithelial development. Binds promiscuously Eph receptors residing on adjacent cells, leading to contact-dependent bidirectional signaling into neighboring cells. The signaling pathway downstream of the receptor is referred to as forward signaling while the signaling pathway downstream of the ephrin ligand is referred to as reverse signaling. Induces compartmentalized signaling within a caveolae-like membrane microdomain when bound to the extracellular domain of its cognate receptor. This signaling event requires the activity of the Fyn tyrosine kinase. Activates the EPHA3 receptor to regulate cell-cell adhesion and cytoskeletal organization. With the receptor EPHA2 may regulate lens fiber cells shape and interactions and be important for lens transparency maintenance. May function actively to stimulate axon fasciculation. The interaction of EFNA5 with EPHA5 also mediates communication between pancreatic islet cells to regulate glucose-stimulated insulin secretion. Cognate/functional ligand for EPHA7, their interaction regulates brain development modulating cell-cell adhesion and repulsion. In Homo sapiens (Human), this protein is Ephrin-A5 (EFNA5).